The chain runs to 115 residues: Large ribosomal subunit protein uL18 (115 aa).

This sequence belongs to the universal ribosomal protein uL18 family. In terms of assembly, part of the 50S ribosomal subunit; part of the 5S rRNA/L5/L18/L25 subcomplex. Contacts the 5S and 23S rRNAs.

Functionally, this is one of the proteins that bind and probably mediate the attachment of the 5S RNA into the large ribosomal subunit, where it forms part of the central protuberance. This Marinobacter nauticus (strain ATCC 700491 / DSM 11845 / VT8) (Marinobacter aquaeolei) protein is Large ribosomal subunit protein uL18.